Reading from the N-terminus, the 162-residue chain is 6,7-dimethyl-8-ribityllumazine synthase (162 aa).

5-amino-6-(D-ribitylamino)uracil contacts are provided by residues Phe-23, 61–63 (AYE), and 85–87 (AVI). Position 90 to 91 (90 to 91 (DT)) interacts with (2S)-2-hydroxy-3-oxobutyl phosphate. His-93 functions as the Proton donor in the catalytic mechanism. Position 118 (Phe-118) interacts with 5-amino-6-(D-ribitylamino)uracil. Arg-132 is a binding site for (2S)-2-hydroxy-3-oxobutyl phosphate.

Belongs to the DMRL synthase family.

It catalyses the reaction (2S)-2-hydroxy-3-oxobutyl phosphate + 5-amino-6-(D-ribitylamino)uracil = 6,7-dimethyl-8-(1-D-ribityl)lumazine + phosphate + 2 H2O + H(+). The protein operates within cofactor biosynthesis; riboflavin biosynthesis; riboflavin from 2-hydroxy-3-oxobutyl phosphate and 5-amino-6-(D-ribitylamino)uracil: step 1/2. Catalyzes the formation of 6,7-dimethyl-8-ribityllumazine by condensation of 5-amino-6-(D-ribitylamino)uracil with 3,4-dihydroxy-2-butanone 4-phosphate. This is the penultimate step in the biosynthesis of riboflavin. In Synechococcus sp. (strain CC9902), this protein is 6,7-dimethyl-8-ribityllumazine synthase.